Reading from the N-terminus, the 209-residue chain is Ribosomal RNA large subunit methyltransferase E (209 aa).

S-adenosyl-L-methionine contacts are provided by Gly63, Trp65, Asp83, Asp99, and Asp124. Lys164 (proton acceptor) is an active-site residue.

It belongs to the class I-like SAM-binding methyltransferase superfamily. RNA methyltransferase RlmE family.

It is found in the cytoplasm. It catalyses the reaction uridine(2552) in 23S rRNA + S-adenosyl-L-methionine = 2'-O-methyluridine(2552) in 23S rRNA + S-adenosyl-L-homocysteine + H(+). Specifically methylates the uridine in position 2552 of 23S rRNA at the 2'-O position of the ribose in the fully assembled 50S ribosomal subunit. This is Ribosomal RNA large subunit methyltransferase E from Aliivibrio fischeri (strain ATCC 700601 / ES114) (Vibrio fischeri).